A 610-amino-acid chain; its full sequence is UvrABC system protein C (610 aa).

The 80-residue stretch at 13 to 92 (TLPGVYLMKN…IKQHKPRYNA (80 aa)) folds into the GIY-YIG domain. Residues 204-239 (KDVLKDLYEEMRLLSEQLEFEKANHLLRTIRYIEKT) form the UVR domain.

It belongs to the UvrC family. Interacts with UvrB in an incision complex.

It is found in the cytoplasm. Functionally, the UvrABC repair system catalyzes the recognition and processing of DNA lesions. UvrC both incises the 5' and 3' sides of the lesion. The N-terminal half is responsible for the 3' incision and the C-terminal half is responsible for the 5' incision. This chain is UvrABC system protein C, found in Protochlamydia amoebophila (strain UWE25).